A 352-amino-acid chain; its full sequence is Glucose 1-dehydrogenase 1 (352 aa).

Cys-35 contacts Zn(2+). Thr-37 is a binding site for substrate. Zn(2+)-binding residues include His-60 and Glu-61. A substrate-binding site is contributed by Asn-83. Zn(2+)-binding residues include Cys-87, Cys-90, Cys-93, and Cys-101. Residues Glu-108, Gln-144, and Asp-148 each coordinate substrate. Residue Gln-144 participates in Zn(2+) binding. Residues 182-185 (TGTI), 204-206 (NKR), 264-266 (FGF), 292-294 (LIN), and Lys-341 contribute to the NADP(+) site. Position 294 (Asn-294) interacts with substrate.

This sequence belongs to the zinc-containing alcohol dehydrogenase family. Glucose 1-dehydrogenase subfamily. Zn(2+) is required as a cofactor.

The catalysed reaction is D-glucose + NAD(+) = D-glucono-1,5-lactone + NADH + H(+). It catalyses the reaction D-glucose + NADP(+) = D-glucono-1,5-lactone + NADPH + H(+). In terms of biological role, catalyzes the NAD(P)(+)-dependent oxidation of D-glucose to D-gluconate via gluconolactone. Can utilize both NAD(+) and NADP(+) as electron acceptor. Is involved in the degradation of glucose through a non-phosphorylative variant of the Entner-Doudoroff pathway. The sequence is that of Glucose 1-dehydrogenase 1 from Picrophilus torridus (strain ATCC 700027 / DSM 9790 / JCM 10055 / NBRC 100828 / KAW 2/3).